The primary structure comprises 221 residues: Ribosomal RNA small subunit methyltransferase G (221 aa).

S-adenosyl-L-methionine-binding positions include Gly85, Phe90, Ala136 to Glu137, and Arg149.

It belongs to the methyltransferase superfamily. RNA methyltransferase RsmG family.

It localises to the cytoplasm. Specifically methylates the N7 position of a guanine in 16S rRNA. The sequence is that of Ribosomal RNA small subunit methyltransferase G from Porphyromonas gingivalis (strain ATCC BAA-308 / W83).